Here is a 136-residue protein sequence, read N- to C-terminus: UPF0310 protein SMU_442 (136 aa).

It belongs to the UPF0310 family.

The polypeptide is UPF0310 protein SMU_442 (Streptococcus mutans serotype c (strain ATCC 700610 / UA159)).